A 217-amino-acid chain; its full sequence is Peptide methionine sulfoxide reductase MsrA (217 aa).

Cysteine 56 is an active-site residue.

It belongs to the MsrA Met sulfoxide reductase family.

It catalyses the reaction L-methionyl-[protein] + [thioredoxin]-disulfide + H2O = L-methionyl-(S)-S-oxide-[protein] + [thioredoxin]-dithiol. It carries out the reaction [thioredoxin]-disulfide + L-methionine + H2O = L-methionine (S)-S-oxide + [thioredoxin]-dithiol. In terms of biological role, has an important function as a repair enzyme for proteins that have been inactivated by oxidation. Catalyzes the reversible oxidation-reduction of methionine sulfoxide in proteins to methionine. The polypeptide is Peptide methionine sulfoxide reductase MsrA (Corynebacterium glutamicum (strain R)).